The sequence spans 97 residues: Na(+)/H(+) antiporter subunit F1 (97 aa).

Transmembrane regions (helical) follow at residues 3–23 (FKIF…AMLI), 35–55 (VVAL…FSIL), and 60–80 (YMLV…AVFS).

This sequence belongs to the CPA3 antiporters (TC 2.A.63) subunit F family. In terms of assembly, may form a heterooligomeric complex that consists of seven subunits: mnhA1, mnhB1, mnhC1, mnhD1, mnhE1, mnhF1 and mnhG1.

Its subcellular location is the cell membrane. Mnh complex is a Na(+)/H(+) antiporter involved in Na(+) excretion. This chain is Na(+)/H(+) antiporter subunit F1 (mnhF1), found in Staphylococcus epidermidis (strain ATCC 35984 / DSM 28319 / BCRC 17069 / CCUG 31568 / BM 3577 / RP62A).